The chain runs to 145 residues: Cuticle protein 5 (145 aa).

This is Cuticle protein 5 from Blaberus craniifer (Death's head cockroach).